The following is a 52-amino-acid chain: Proteinase inhibitor (52 aa).

Residue Gln1 is modified to Pyrrolidone carboxylic acid. Cystine bridges form between Cys3–Cys40, Cys6–Cys24, Cys7–Cys36, and Cys13–Cys49.

The protein belongs to the protease inhibitor I20 (potato type II proteinase inhibitor) family.

The protein localises to the secreted. This Solanum melongena (Eggplant) protein is Proteinase inhibitor.